The chain runs to 1263 residues: DNA topoisomerase 2 (1263 aa).

ATP contacts are provided by residues Asn80, Asn109, 137–139 (STN), and 150–157 (GKNGFGAK). Residues 329–331 (VKK) form an interaction with DNA region. 362–364 (QTK) lines the ATP pocket. Positions 439–553 (CTLILTEGDS…SLVKYEGFIQ (115 aa)) constitute a Toprim domain. Mg(2+) is bound by residues Glu445, Asp522, and Asp524. One can recognise a Topo IIA-type catalytic domain in the interval 737–1223 (VPNLMDGFKP…SPEEIWEEEL (487 aa)). Residue Tyr828 is the O-(5'-phospho-DNA)-tyrosine intermediate of the active site. Residues 977-1015 (KKASKAVSSAKNTKTTTKAGSKTGSRTRKNPALAKKSQK) form a disordered region. Positions 981–1000 (KAVSSAKNTKTTTKAGSKTG) are enriched in low complexity. Positions 1068 to 1077 (KLVKPLNLTN) are interaction with DNA. The segment at 1244–1263 (LLNKKKGSTGKKSRKTSTQK) is disordered. The span at 1247–1263 (KKKGSTGKKSRKTSTQK) shows a compositional bias: basic residues.

The protein belongs to the type II topoisomerase family. Mg(2+) serves as cofactor. It depends on Mn(2+) as a cofactor. Requires Ca(2+) as cofactor.

The enzyme catalyses ATP-dependent breakage, passage and rejoining of double-stranded DNA.. Functionally, can introduce negative superhelical turns into double-stranded circular DNA. This is DNA topoisomerase 2 (TOP2) from Acanthamoeba polyphaga (Amoeba).